The chain runs to 479 residues: Glutamate--tRNA ligase (479 aa).

Positions 21 to 31 (PSPTGYLHVGG) match the 'HIGH' region motif. A 'KMSKS' region motif is present at residues 248 to 252 (KLSKR). Lys-251 provides a ligand contact to ATP.

It belongs to the class-I aminoacyl-tRNA synthetase family. Glutamate--tRNA ligase type 1 subfamily. In terms of assembly, monomer.

It localises to the cytoplasm. It carries out the reaction tRNA(Glu) + L-glutamate + ATP = L-glutamyl-tRNA(Glu) + AMP + diphosphate. In terms of biological role, catalyzes the attachment of glutamate to tRNA(Glu) in a two-step reaction: glutamate is first activated by ATP to form Glu-AMP and then transferred to the acceptor end of tRNA(Glu). This Actinobacillus pleuropneumoniae serotype 7 (strain AP76) protein is Glutamate--tRNA ligase.